Consider the following 486-residue polypeptide: Ribulose bisphosphate carboxylase large chain (486 aa).

The substrate site is built by N125 and T175. The active-site Proton acceptor is K177. K179 contributes to the substrate binding site. Residues K203, D205, and E206 each contribute to the Mg(2+) site. Residue K203 is modified to N6-carboxylysine. The Proton acceptor role is filled by H295. Residues R296, H328, and S380 each contribute to the substrate site.

The protein belongs to the RuBisCO large chain family. Type I subfamily. As to quaternary structure, heterohexadecamer of 8 large chains and 8 small chains. Mg(2+) is required as a cofactor.

It carries out the reaction 2 (2R)-3-phosphoglycerate + 2 H(+) = D-ribulose 1,5-bisphosphate + CO2 + H2O. It catalyses the reaction D-ribulose 1,5-bisphosphate + O2 = 2-phosphoglycolate + (2R)-3-phosphoglycerate + 2 H(+). RuBisCO catalyzes two reactions: the carboxylation of D-ribulose 1,5-bisphosphate, the primary event in carbon dioxide fixation, as well as the oxidative fragmentation of the pentose substrate. Both reactions occur simultaneously and in competition at the same active site. The chain is Ribulose bisphosphate carboxylase large chain from Bradyrhizobium diazoefficiens (strain JCM 10833 / BCRC 13528 / IAM 13628 / NBRC 14792 / USDA 110).